A 240-amino-acid chain; its full sequence is Probable phosphatase Pcar_2586 (240 aa).

His12, His14, His20, His45, Glu78, His105, His136, Asp197, and His199 together coordinate Zn(2+).

Belongs to the PHP family. The cofactor is Zn(2+).

This is Probable phosphatase Pcar_2586 from Syntrophotalea carbinolica (strain DSM 2380 / NBRC 103641 / GraBd1) (Pelobacter carbinolicus).